The chain runs to 391 residues: Ferrochelatase (391 aa).

Fe cation is bound by residues histidine 196 and glutamate 281.

This sequence belongs to the ferrochelatase family.

The protein localises to the cytoplasm. The enzyme catalyses heme b + 2 H(+) = protoporphyrin IX + Fe(2+). It participates in porphyrin-containing compound metabolism; protoheme biosynthesis; protoheme from protoporphyrin-IX: step 1/1. In terms of biological role, catalyzes the ferrous insertion into protoporphyrin IX. The polypeptide is Ferrochelatase (Prochlorococcus marinus (strain SARG / CCMP1375 / SS120)).